We begin with the raw amino-acid sequence, 582 residues long: 15-cis-phytoene desaturase, chloroplastic/chromoplastic (582 aa).

The transit peptide at 1 to 110 (MPQIGLVSAV…FRSSPRPTKP (110 aa)) directs the protein to the chloroplast and chromoplast. FAD contacts are provided by residues 140–141 (EA), lysine 148, 165–166 (HI), and tyrosine 171. Substrate is bound at residue arginine 306. Positions 348 and 537 each coordinate FAD. Alanine 545 contacts substrate. An FAD-binding site is contributed by methionine 547.

This sequence belongs to the carotenoid/retinoid oxidoreductase family. In terms of assembly, homotetramer. FAD serves as cofactor.

The protein localises to the plastid. It localises to the chloroplast. The protein resides in the chromoplast. It is found in the membrane. It carries out the reaction 2 a plastoquinone + 15-cis-phytoene = 9,9',15-tri-cis-zeta-carotene + 2 a plastoquinol. The protein operates within carotenoid biosynthesis; lycopene biosynthesis. With respect to regulation, inhibited by the herbicides metflurazon, difunone, fluridone and diflufenican. Functionally, converts phytoene into zeta-carotene via the intermediary of phytofluene by the symmetrical introduction of two double bonds at the C-11 and C-11' positions of phytoene with a concomitant isomerization of two neighboring double bonds at the C9 and C9' positions from trans to cis. The protein is 15-cis-phytoene desaturase, chloroplastic/chromoplastic (PDS) of Capsicum annuum (Capsicum pepper).